Here is a 223-residue protein sequence, read N- to C-terminus: Cytidylate kinase (223 aa).

Position 12-20 (G12–T20) interacts with ATP.

Belongs to the cytidylate kinase family. Type 1 subfamily.

Its subcellular location is the cytoplasm. It carries out the reaction CMP + ATP = CDP + ADP. The enzyme catalyses dCMP + ATP = dCDP + ADP. The protein is Cytidylate kinase of Aster yellows witches'-broom phytoplasma (strain AYWB).